Consider the following 497-residue polypeptide: Acetyl-coenzyme A carboxylase carboxyl transferase subunit beta, chloroplastic (497 aa).

In terms of domain architecture, CoA carboxyltransferase N-terminal spans 230-497 (LWIQCENCYG…FFPLNQNSIK (268 aa)). 4 residues coordinate Zn(2+): C234, C237, C253, and C256. A C4-type zinc finger spans residues 234 to 256 (CENCYGLNYKKFFRSKMNICEQC).

This sequence belongs to the AccD/PCCB family. In terms of assembly, acetyl-CoA carboxylase is a heterohexamer composed of biotin carboxyl carrier protein, biotin carboxylase and 2 subunits each of ACCase subunit alpha and ACCase plastid-coded subunit beta (accD). Requires Zn(2+) as cofactor.

It localises to the plastid. Its subcellular location is the chloroplast stroma. It catalyses the reaction N(6)-carboxybiotinyl-L-lysyl-[protein] + acetyl-CoA = N(6)-biotinyl-L-lysyl-[protein] + malonyl-CoA. Its pathway is lipid metabolism; malonyl-CoA biosynthesis; malonyl-CoA from acetyl-CoA: step 1/1. Its function is as follows. Component of the acetyl coenzyme A carboxylase (ACC) complex. Biotin carboxylase (BC) catalyzes the carboxylation of biotin on its carrier protein (BCCP) and then the CO(2) group is transferred by the transcarboxylase to acetyl-CoA to form malonyl-CoA. The polypeptide is Acetyl-coenzyme A carboxylase carboxyl transferase subunit beta, chloroplastic (Platanus occidentalis (Sycamore)).